A 148-amino-acid polypeptide reads, in one-letter code: Antitoxin Xre (148 aa).

The protein belongs to the MbcA/ParS/Xre antitoxin family. As to quaternary structure, homodimer. Forms a complex with cognate toxin Rse.

In terms of biological role, antitoxin component of a type II toxin-antitoxin (TA) system. Neutralizes the NAD(+) depleting activity of cognate toxin Res. In Photorhabdus laumondii subsp. laumondii (strain DSM 15139 / CIP 105565 / TT01) (Photorhabdus luminescens subsp. laumondii), this protein is Antitoxin Xre.